We begin with the raw amino-acid sequence, 121 residues long: Small ribosomal subunit protein uS13 (121 aa).

The tract at residues 91–121 (HRRGLPVRGQNTKNNARTRKGKKASMAGKKK) is disordered. The segment covering 106-121 (ARTRKGKKASMAGKKK) has biased composition (basic residues).

This sequence belongs to the universal ribosomal protein uS13 family. As to quaternary structure, part of the 30S ribosomal subunit. Forms a loose heterodimer with protein S19. Forms two bridges to the 50S subunit in the 70S ribosome.

Its function is as follows. Located at the top of the head of the 30S subunit, it contacts several helices of the 16S rRNA. In the 70S ribosome it contacts the 23S rRNA (bridge B1a) and protein L5 of the 50S subunit (bridge B1b), connecting the 2 subunits; these bridges are implicated in subunit movement. Contacts the tRNAs in the A and P-sites. The chain is Small ribosomal subunit protein uS13 from Lacticaseibacillus paracasei (strain ATCC 334 / BCRC 17002 / CCUG 31169 / CIP 107868 / KCTC 3260 / NRRL B-441) (Lactobacillus paracasei).